The sequence spans 134 residues: Small ribosomal subunit protein uS8 (134 aa).

The protein belongs to the universal ribosomal protein uS8 family. Part of the 30S ribosomal subunit. Contacts proteins S5 and S12.

One of the primary rRNA binding proteins, it binds directly to 16S rRNA central domain where it helps coordinate assembly of the platform of the 30S subunit. The sequence is that of Small ribosomal subunit protein uS8 from Petrotoga mobilis (strain DSM 10674 / SJ95).